We begin with the raw amino-acid sequence, 330 residues long: Syntaxin-121 (330 aa).

A compositionally biased stretch (polar residues) spans 1–10 (MNNLFSSSWK). A disordered region spans residues 1 to 39 (MNNLFSSSWKRTGGGGGGDGDIESGGGVEMAPPPGAAAG). Over 1-284 (MNNLFSSSWK…RKHQKSTRKW (284 aa)) the chain is Cytoplasmic. Residues 12 to 28 (TGGGGGGDGDIESGGGV) show a composition bias toward gly residues. One can recognise a t-SNARE coiled-coil homology domain in the interval 212 to 274 (VAEIQERHGA…DRGREQLVVA (63 aa)). A helical; Anchor for type IV membrane protein transmembrane segment spans residues 285–305 (TCIAIIILLVLILVVVLPIVL). The Vesicular segment spans residues 306 to 330 (KFVNNNKSSSSSPAPATPSPPPPTA). The segment at 311-330 (NKSSSSSPAPATPSPPPPTA) is disordered. The segment covering 320–330 (PATPSPPPPTA) has biased composition (pro residues).

The protein belongs to the syntaxin family. In terms of assembly, interacts with SNAP32. As to expression, expressed in roots, stems, leaf blades and leaf sheaths.

The protein resides in the cell membrane. In terms of biological role, vesicle trafficking protein that functions in the secretory pathway. Involved in plant defense by mediating host resistance to the rice blast fungus Magnaporthe oryzae. The interaction with SNAP32 may contribute to host resistance to the rice blast fungus. The sequence is that of Syntaxin-121 from Oryza sativa subsp. japonica (Rice).